The sequence spans 128 residues: Fluoride-specific ion channel FluC 1 (128 aa).

Transmembrane regions (helical) follow at residues 10-30 (VAFF…AFSF), 32-52 (GTVI…YFFL), 59-79 (AWLT…FSSF), and 93-113 (FGAL…AWAG). Residues Gly-71 and Thr-74 each contribute to the Na(+) site.

It belongs to the fluoride channel Fluc/FEX (TC 1.A.43) family.

The protein resides in the cell membrane. The enzyme catalyses fluoride(in) = fluoride(out). Its activity is regulated as follows. Na(+) is not transported, but it plays an essential structural role and its presence is essential for fluoride channel function. In terms of biological role, fluoride-specific ion channel. Important for reducing fluoride concentration in the cell, thus reducing its toxicity. The chain is Fluoride-specific ion channel FluC 1 from Lactobacillus delbrueckii subsp. bulgaricus (strain ATCC 11842 / DSM 20081 / BCRC 10696 / JCM 1002 / NBRC 13953 / NCIMB 11778 / NCTC 12712 / WDCM 00102 / Lb 14).